The following is an 833-amino-acid chain: Copper-exporting P-type ATPase (833 aa).

2 consecutive HMA domains span residues 3-64 and 98-161; these read QTID…YGAT and ESQQ…YGAE. Residues Cys-14, Cys-17, Cys-109, and Cys-112 each contribute to the Cu(+) site. The next 6 helical transmembrane spans lie at 186-206, 217-237, 253-273, 283-303, 437-457, and 463-483; these read WQAI…MIGD, LWLA…GHFY, TLVA…NLWP, LYYE…MLEA, AVFV…WYFF, and IVYT…CALG. The 4-aspartylphosphate intermediate role is filled by Asp-522. 2 residues coordinate Mg(2+): Asp-719 and Asp-723. Helical transmembrane passes span 778–798 and 800–820; these read LGAF…LWPF and GTLL…ITVV.

This sequence belongs to the cation transport ATPase (P-type) (TC 3.A.3) family. Type IB subfamily.

It localises to the cell inner membrane. The protein resides in the cytoplasm. It catalyses the reaction Cu(+)(in) + ATP + H2O = Cu(+)(out) + ADP + phosphate + H(+). Functionally, involved in Cu(+) export. Essential for copper tolerance under both aerobic and anaerobic conditions. Its function is as follows. Probably also encodes a cytoplasmic copper chaperone CopA(Z) that is produced by programmed ribosomal frameshifting. The chain is Copper-exporting P-type ATPase (copA) from Salmonella typhimurium (strain LT2 / SGSC1412 / ATCC 700720).